The primary structure comprises 337 residues: DNA-directed RNA polymerase subunit alpha (337 aa).

The alpha N-terminal domain (alpha-NTD) stretch occupies residues 1 to 231 (MRNITTSAYT…KQLSVFDKIT (231 aa)). An alpha C-terminal domain (alpha-CTD) region spans residues 248 to 337 (NTKLLQNITD…IAELKAQNEG (90 aa)).

The protein belongs to the RNA polymerase alpha chain family. In terms of assembly, homodimer. The RNAP catalytic core consists of 2 alpha, 1 beta, 1 beta' and 1 omega subunit. When a sigma factor is associated with the core the holoenzyme is formed, which can initiate transcription.

It carries out the reaction RNA(n) + a ribonucleoside 5'-triphosphate = RNA(n+1) + diphosphate. In terms of biological role, DNA-dependent RNA polymerase catalyzes the transcription of DNA into RNA using the four ribonucleoside triphosphates as substrates. The polypeptide is DNA-directed RNA polymerase subunit alpha (Campylobacter jejuni subsp. jejuni serotype O:6 (strain 81116 / NCTC 11828)).